The following is a 691-amino-acid chain: CREB-regulated transcription coactivator 2 (691 aa).

The span at 1–20 shows a compositional bias: polar residues; it reads MATSGANGPGSATASASNPR. The interval 1–30 is disordered; it reads MATSGANGPGSATASASNPRKFSEKIALQK. N-acetylalanine is present on Ala-2. An Asymmetric dimethylarginine; by PRMT6 modification is found at Arg-51. 3 positions are modified to phosphoserine: Ser-70, Ser-86, and Ser-90. Asymmetric dimethylarginine; by PRMT6 occurs at positions 99, 120, and 123. A Phosphoserine modification is found at Ser-136. Asymmetric dimethylarginine; by PRMT6 occurs at positions 161 and 168. At Thr-169 the chain carries Phosphothreonine. At Ser-171 the chain carries Phosphoserine; by AMPK, MARK2, SIK1 and SIK2. Over residues 174 to 186 the composition is skewed to polar residues; sequence ALHTSVMNPNPQD. Positions 174–195 are disordered; it reads ALHTSVMNPNPQDTYPGPTPPS. The residue at position 192 (Thr-192) is a Phosphothreonine. A Glycyl lysine isopeptide (Lys-Gly) (interchain with G-Cter in SUMO2) cross-link involves residue Lys-234. The Nuclear export signal signature appears at 271 to 287; it reads TGGSLPDLTNLHFPPPL. Position 274 is a phosphoserine; by MARK2 (Ser-274). Disordered stretches follow at residues 280 to 306 and 335 to 491; these read NLHFPPPLPTPLDPEETVYPSLSGGNS and HSPL…YSPP. 5 positions are modified to phosphoserine: Ser-306, Ser-368, Ser-393, Ser-433, and Ser-456. Composition is skewed to low complexity over residues 335–383 and 390–411; these read HSPL…HALP and PSLSAPALSSSSSSSSTSSPVL. Polar residues predominate over residues 447–468; it reads SQQQLPKQFSPTMSPTLSSITQ. Phosphotyrosine is present on Tyr-488. 2 positions are modified to phosphoserine: Ser-489 and Ser-492. Thr-501 bears the Phosphothreonine mark. Residues 513–543 form a disordered region; sequence CLVQPSGGQPPGRQPHYGTLYPPGSSGHGQQ. Ser-611, Ser-621, and Ser-622 each carry phosphoserine.

This sequence belongs to the TORC family. As to quaternary structure, binds, as a tetramer, through its N-terminal region, with the bZIP domain of CREB1. 'Arg-314' in the bZIP domain of CREB1 is essential for this interaction. Interaction, via its C-terminal, with TAF4, enhances recruitment of TAF4 to CREB1. Interacts with SIK2. Interacts with 14-3-3 proteins, YWHAB and YWHAG. Interacts (probably when phosphorylated at Ser-171) with YWHAE. Interacts with calmodulin-dependent catalytic subunit PPP3CA/calcineurin A. Interaction with COP1 mediates nuclear export and degradation of CRTC2. Phosphorylation/dephosphorylation states of Ser-171 are required for regulating transduction of CREB activity. CRTCs/TORCs are inactive when phosphorylated, and active when dephosphorylated at this site. This primary site of phosphorylation, is regulated by cAMP and calcium levels and is dependent on the phosphorylation of SIKs (SIK1 and SIK2) by LKB1. Following adenylyl cyclase activation, dephosphorylated at Ser-171 by PPP3CA/calcineurin A resulting in CRTC2 dissociation from 14-3-3 proteins and PPP3CA. Both insulin and AMPK increase this phosphorylation of CRTC2 while glucagon suppresses it. Phosphorylation at Ser-274 by MARK2 is induced under low glucose conditions and dephosphorylated in response to glucose influx. Phosphorylation at Ser-274 promotes interaction with 14-3-3 proteins and translocation to the cytoplasm. Post-translationally, asymmetric dimethylation of arginine resisues by PRMT6 enhances the association of CRTC2 with CREB on the promoters of gluconeogenic genes.

Its subcellular location is the cytoplasm. It is found in the nucleus. In terms of biological role, transcriptional coactivator for CREB1 which activates transcription through both consensus and variant cAMP response element (CRE) sites. Acts as a coactivator, in the SIK/TORC signaling pathway, being active when dephosphorylated and acts independently of CREB1 'Ser-133' phosphorylation. Enhances the interaction of CREB1 with TAF4. Regulates gluconeogenesis as a component of the LKB1/AMPK/TORC2 signaling pathway. Regulates the expression of specific genes such as the steroidogenic gene, StAR. Potent coactivator of PPARGC1A and inducer of mitochondrial biogenesis in muscle cells. The chain is CREB-regulated transcription coactivator 2 (Crtc2) from Rattus norvegicus (Rat).